A 283-amino-acid polypeptide reads, in one-letter code: Release factor glutamine methyltransferase (283 aa).

S-adenosyl-L-methionine-binding positions include 120–124 (GTGSG), Asp-143, Phe-172, and Asn-187. 187 to 190 (NPPY) provides a ligand contact to substrate.

It belongs to the protein N5-glutamine methyltransferase family. PrmC subfamily.

It carries out the reaction L-glutaminyl-[peptide chain release factor] + S-adenosyl-L-methionine = N(5)-methyl-L-glutaminyl-[peptide chain release factor] + S-adenosyl-L-homocysteine + H(+). Its function is as follows. Methylates the class 1 translation termination release factors RF1/PrfA and RF2/PrfB on the glutamine residue of the universally conserved GGQ motif. This chain is Release factor glutamine methyltransferase, found in Moorella thermoacetica (strain ATCC 39073 / JCM 9320).